A 129-amino-acid polypeptide reads, in one-letter code: Histone H2A.J (129 aa).

Positions 1–22 (MSGRGKQGGKVRAKAKSRSSRA) are disordered. An N6-acetyllysine mark is found at lysine 6 and lysine 10. The segment covering 7-19 (QGGKVRAKAKSRS) has biased composition (basic residues). Position 10 is an N6-lactoyllysine; alternate (lysine 10). An N5-methylglutamine modification is found at glutamine 105. Threonine 121 is modified (phosphothreonine; by DCAF1).

The protein belongs to the histone H2A family. The nucleosome is a histone octamer containing two molecules each of H2A, H2B, H3 and H4 assembled in one H3-H4 heterotetramer and two H2A-H2B heterodimers. The octamer wraps approximately 147 bp of DNA. In terms of processing, glutamine methylation at Gln-105 (H2AQ104me) by FBL is specifically dedicated to polymerase I. It is present at 35S ribosomal DNA locus and impairs binding of the FACT complex. Post-translationally, monoubiquitination of Lys-120 (H2AXK119ub) gives a specific tag for epigenetic transcriptional repression. Following DNA double-strand breaks (DSBs), it is ubiquitinated through 'Lys-63' linkage of ubiquitin moieties. Phosphorylation on Ser-2 (H2AS1ph) is enhanced during mitosis. Phosphorylation on Ser-2 by RPS6KA5/MSK1 directly represses transcription. Acetylation of H3 inhibits Ser-2 phosphorylation by RPS6KA5/MSK1. Phosphorylation at Thr-121 (H2AT120ph) by DCAF1 is present in the regulatory region of many tumor suppresor genes and down-regulates their transcription.

The protein localises to the nucleus. It is found in the chromosome. Core component of nucleosome. Nucleosomes wrap and compact DNA into chromatin, limiting DNA accessibility to the cellular machineries which require DNA as a template. Histones thereby play a central role in transcription regulation, DNA repair, DNA replication and chromosomal stability. DNA accessibility is regulated via a complex set of post-translational modifications of histones, also called histone code, and nucleosome remodeling. This chain is Histone H2A.J, found in Bos taurus (Bovine).